Reading from the N-terminus, the 368-residue chain is Polynucleotide 5'-hydroxyl-kinase NOL9 (368 aa).

Residue 36-43 (GPKNSGKS) coordinates ATP.

This sequence belongs to the Clp1 family. NOL9/GRC3 subfamily.

It is found in the nucleus. The protein localises to the nucleolus. Polynucleotide 5'-kinase involved in rRNA processing. This is Polynucleotide 5'-hydroxyl-kinase NOL9 from Arabidopsis thaliana (Mouse-ear cress).